The chain runs to 617 residues: Mitochondrial Rho GTPase 2 (617 aa).

The Cytoplasmic portion of the chain corresponds to 1–590 (MKRDVRILLL…LNGSDMSSTS (590 aa)). Residues 2–168 (KRDVRILLLG…FYYAQKAVLH (167 aa)) enclose the Miro 1 domain. Gly16, Lys17, Thr18, and Ser19 together coordinate GTP. Thr18 contributes to the Mg(2+) binding site. Asp57 is a Mg(2+) binding site. GTP is bound by residues Ser59, Asn118, Lys119, Asp121, Ala149, and Lys150. 2 EF-hand domains span residues 184–219 (QCVR…CFGN) and 304–339 (LGHQ…LPYM). Asp197, Asp199, Asp201, Glu208, Asp317, Asp319, Asp321, and Glu328 together coordinate Ca(2+). The region spanning 416–578 (RTVFLCKVIG…YSKLTWAAMY (163 aa)) is the Miro 2 domain. GTP-binding residues include Gly428, Gly430, Lys431, and Thr432. Thr432 and Glu474 together coordinate Mg(2+). 2 residues coordinate GTP: Lys528 and Asp530. Residues 591–613 (FWLRVTLGATIAAMLGFALYRAF) traverse the membrane as a helical; Anchor for type IV membrane protein segment. Residues 614–617 (SRHK) lie on the Mitochondrial intermembrane side of the membrane.

The protein belongs to the mitochondrial Rho GTPase family. In terms of assembly, homodimer.

It is found in the mitochondrion outer membrane. It catalyses the reaction GTP + H2O = GDP + phosphate + H(+). The enzyme catalyses ATP + H2O = ADP + phosphate + H(+). It carries out the reaction UTP + H2O = UDP + phosphate + H(+). In terms of biological role, atypical mitochondrial nucleoside-triphosphatase (NTPase) involved in mitochondrial trafficking. Probably involved in control of anterograde transport of mitochondria and their subcellular distribution. Can hydrolyze GTP, ATP and UTP. The protein is Mitochondrial Rho GTPase 2 (rhot2) of Danio rerio (Zebrafish).